A 169-amino-acid chain; its full sequence is MYGIYIHDELTINDTELSMDKLCSGIVENQSKCIAVSINSSNIISDLNMSVRKIIYKFGTNRYLFYYYNSKWYTDIHHILSLMDLSLGSFISELQKYYPECDLTMWILRGDGMCIHRKLIDLETMTKIILSFNSNFTRCFKAECIYHMAIVYILIMYQIYILSLIRINT.

4 N-linked (GlcNAc...) asparagine; by host glycosylation sites follow: asparagine 13, asparagine 29, asparagine 39, and asparagine 48. The short motif at 109 to 111 (RGD) is the Cell attachment site element. A glycan (N-linked (GlcNAc...) asparagine; by host) is linked at asparagine 135. Residues 145 to 165 (IYHMAIVYILIMYQIYILSLI) traverse the membrane as a helical segment.

It localises to the membrane. This is an uncharacterized protein from Acanthamoeba polyphaga (Amoeba).